We begin with the raw amino-acid sequence, 924 residues long: Periplasmic nitrate reductase (924 aa).

The tat-type signal signal peptide spans 1–30 (MNRRDFIKNTAIASAASVAGLSVPSSMLGA). Positions 35 to 91 (WKWDKAVCRFCGTGCGIMIARKDGKIVATKGDPAAPVNRGLNCIKGYFNAKIMYGED) constitute a 4Fe-4S Mo/W bis-MGD-type domain. Residues cysteine 42, cysteine 45, cysteine 49, and cysteine 77 each coordinate [4Fe-4S] cluster. Mo-bis(molybdopterin guanine dinucleotide) is bound by residues lysine 79, glutamine 147, asparagine 172, cysteine 176, 209–216 (WGANMAEM), methionine 417, glutamine 421, asparagine 527, 552–553 (SD), lysine 575, aspartate 602, and 814–823 (TGRVLEHWHS). Tryptophan 890 provides a ligand contact to substrate. Mo-bis(molybdopterin guanine dinucleotide) contacts are provided by asparagine 898 and lysine 915.

It belongs to the prokaryotic molybdopterin-containing oxidoreductase family. NasA/NapA/NarB subfamily. In terms of assembly, component of the periplasmic nitrate reductase NapAB complex composed of NapA and NapB. It depends on [4Fe-4S] cluster as a cofactor. The cofactor is Mo-bis(molybdopterin guanine dinucleotide). Predicted to be exported by the Tat system. The position of the signal peptide cleavage has not been experimentally proven.

It localises to the periplasm. It catalyses the reaction 2 Fe(II)-[cytochrome] + nitrate + 2 H(+) = 2 Fe(III)-[cytochrome] + nitrite + H2O. Functionally, catalytic subunit of the periplasmic nitrate reductase complex NapAB. Receives electrons from NapB and catalyzes the reduction of nitrate to nitrite. In Campylobacter jejuni subsp. jejuni serotype O:2 (strain ATCC 700819 / NCTC 11168), this protein is Periplasmic nitrate reductase.